The sequence spans 316 residues: Ribosomal RNA small subunit methyltransferase H (316 aa).

S-adenosyl-L-methionine is bound by residues 35 to 37 (AGH), D55, F84, D105, and Q112.

The protein belongs to the methyltransferase superfamily. RsmH family.

It is found in the cytoplasm. It carries out the reaction cytidine(1402) in 16S rRNA + S-adenosyl-L-methionine = N(4)-methylcytidine(1402) in 16S rRNA + S-adenosyl-L-homocysteine + H(+). Specifically methylates the N4 position of cytidine in position 1402 (C1402) of 16S rRNA. This Streptococcus pneumoniae (strain 70585) protein is Ribosomal RNA small subunit methyltransferase H.